A 194-amino-acid polypeptide reads, in one-letter code: Erythropoietin (194 aa).

A signal peptide spans 1 to 27 (MGARDCTPLLLLLLSFLLFPLGLPVLG). 2 disulfide bridges follow: cysteine 34-cysteine 189 and cysteine 56-cysteine 60. N-linked (GlcNAc...) asparagine glycosylation is present at asparagine 51. N-linked (GlcNAc...) asparagine glycans are attached at residues asparagine 65 and asparagine 110.

The protein belongs to the EPO/TPO family. As to expression, produced by kidney or liver of adult mammals and by liver of fetal or neonatal mammals.

The protein localises to the secreted. Hormone involved in the regulation of erythrocyte proliferation and differentiation and the maintenance of a physiological level of circulating erythrocyte mass. Binds to EPOR leading to EPOR dimerization and JAK2 activation thereby activating specific downstream effectors, including STAT1 and STAT3. The polypeptide is Erythropoietin (EPO) (Ovis aries (Sheep)).